The chain runs to 192 residues: Phosphoheptose isomerase (192 aa).

The region spanning 35–192 (LIETLENQGK…CIERHFANKN (158 aa)) is the SIS domain. A substrate-binding site is contributed by 50-52 (NGG). Positions 59 and 63 each coordinate Zn(2+). Substrate is bound by residues glutamate 63, 92-93 (ND), 118-120 (STS), serine 123, and glutamine 170. Residues glutamine 170 and histidine 178 each contribute to the Zn(2+) site.

The protein belongs to the SIS family. GmhA subfamily. In terms of assembly, homotetramer. It depends on Zn(2+) as a cofactor.

Its subcellular location is the cytoplasm. The enzyme catalyses 2 D-sedoheptulose 7-phosphate = D-glycero-alpha-D-manno-heptose 7-phosphate + D-glycero-beta-D-manno-heptose 7-phosphate. Its pathway is carbohydrate biosynthesis; D-glycero-D-manno-heptose 7-phosphate biosynthesis; D-glycero-alpha-D-manno-heptose 7-phosphate and D-glycero-beta-D-manno-heptose 7-phosphate from sedoheptulose 7-phosphate: step 1/1. In terms of biological role, catalyzes the isomerization of sedoheptulose 7-phosphate in D-glycero-D-manno-heptose 7-phosphate. The chain is Phosphoheptose isomerase from Helicobacter pylori (strain Shi470).